Consider the following 227-residue polypeptide: PKHD-type hydroxylase BamMC406_5004 (227 aa).

One can recognise a Fe2OG dioxygenase domain in the interval 80-179 (QVYPPLFNRY…RVASFFWVQS (100 aa)). The Fe cation site is built by histidine 98, aspartate 100, and histidine 160. Arginine 170 serves as a coordination point for 2-oxoglutarate.

Requires Fe(2+) as cofactor. It depends on L-ascorbate as a cofactor.

This is PKHD-type hydroxylase BamMC406_5004 from Burkholderia ambifaria (strain MC40-6).